A 1763-amino-acid chain; its full sequence is Collagen alpha-2(IV) chain (1763 aa).

The first 26 residues, 1–26 (MSSRLRIPLWLLLPTTALVYFVTTVS), serve as a signal peptide directing secretion. Residues 27-42 (TQITCRDCTNRGCFCV) form a 7S domain region. A triple-helical region region spans residues 43–1529 (GEKGSMGIPG…SGPPGPPGPS (1487 aa)). 2 disordered regions span residues 51 to 529 (PGPQ…PGPK) and 550 to 1529 (AGYA…PGPS). Residues 72-81 (PGPKGQKGSQ) show a composition bias toward low complexity. Asn-126 carries N-linked (GlcNAc...) asparagine glycosylation. The span at 135–152 (PGLPGPPGMPGFPGPPGV) shows a compositional bias: pro residues. The span at 190 to 199 (FPGEKGDRGD) shows a compositional bias: basic and acidic residues. A compositionally biased stretch (pro residues) spans 206 to 217 (RGPPGEAGPPGN). Residues 225 to 235 (PKGDPGEQGPR) are compositionally biased toward low complexity. Ala-249 carries an O-linked (Xyl...) (glycosaminoglycan) serine glycan. Residues 326-335 (DGLPGVPGLP) are compositionally biased toward low complexity. A compositionally biased stretch (gly residues) spans 400-409 (GLPGGPGLPG). Composition is skewed to low complexity over residues 410 to 419 (LPGLEGLPGP) and 428 to 453 (IPGA…PGPR). Residues 466 to 481 (KDGRPGLDGLPGRKGE) are compositionally biased toward basic and acidic residues. The segment covering 564 to 582 (LPGIPGATGAPGDDGLPGA) has biased composition (low complexity). The segment covering 583-592 (PGRPGPPGPP) has biased composition (pro residues). Low complexity-rich tracts occupy residues 699-714 (DAGL…AVGP) and 731-783 (KDGL…PGIP). A compositionally biased stretch (pro residues) spans 810–832 (PGLPGPKGEPGPSTTGPPGPPGF). Composition is skewed to low complexity over residues 865–895 (EIGL…KEGP), 946–977 (FPGQ…PGQK), 1040–1051 (PGLPGQPGLRGP), 1077–1086 (LMGEKGLPGL), 1108–1146 (PGLK…QPGL), 1210–1231 (PGFP…PGPR), 1280–1296 (LPGL…PGLK), 1367–1386 (PAGL…PGFP), 1462–1480 (LPGL…FAGA), and 1499–1510 (PGLPGFPGIEGI). Positions 1511-1528 (PGPPGLPGPSGPPGPPGP) are enriched in pro residues. Positions 1533 to 1756 (GFLLVKHSQT…SRCQVCIRSP (224 aa)) constitute a Collagen IV NC1 domain. 6 disulfides stabilise this stretch: Cys-1548–Cys-1637, Cys-1581–Cys-1634, Cys-1593–Cys-1599, Cys-1656–Cys-1752, Cys-1690–Cys-1749, and Cys-1702–Cys-1709.

Belongs to the type IV collagen family. Trimers of two alpha 1(IV) and one alpha 2(IV) chain. Type IV collagen forms a mesh-like network linked through intermolecular interactions between 7S domains and between NC1 domains. Post-translationally, prolines at the third position of the tripeptide repeating unit (G-X-Y) are hydroxylated in some or all of the chains. Type IV collagens contain numerous cysteine residues which are involved in inter- and intramolecular disulfide bonding. 12 of these, located in the NC1 domain, are conserved in all known type IV collagens. In terms of processing, the trimeric structure of the NC1 domains is stabilized by covalent bonds between Lys and Met residues.

It localises to the secreted. It is found in the extracellular space. The protein localises to the extracellular matrix. Its subcellular location is the basement membrane. Collagen type IV is specific for basement membranes. This is Collagen alpha-2(IV) chain from Ascaris suum (Pig roundworm).